Reading from the N-terminus, the 1710-residue chain is Phosphatidylinositol 4-phosphate 5-kinase (1710 aa).

One can recognise an EF-hand domain in the interval 68 to 98; the sequence is YKSIFKAFDLNNDNYLDFYEFCVAINIMLKG. 5 residues coordinate Ca(2+): Asp76, Asn78, Asp80, Tyr82, and Glu87. Disordered stretches follow at residues 139–255, 427–479, and 895–993; these read NNMN…DPIN, KQKK…IKSV, and GEGH…HNNN. Positions 140-235 are enriched in low complexity; it reads NMNGDNINGD…HNNNSHNNNN (96 aa). A compositionally biased stretch (polar residues) spans 236–248; sequence KAENSLGQPLNEK. Basic residues predominate over residues 427–444; sequence KQKKKKKKKKKKKKKKEK. Low complexity predominate over residues 456-468; it reads SSSMENKSQNKSQ. Residues 902–973 show a composition bias toward acidic residues; sequence EEEEKNDDEE…DDNDDNDDND (72 aa). Basic and acidic residues predominate over residues 974-987; it reads EKSNIKIENKKDVP. The PIPK domain maps to 1334 to 1709; the sequence is QKKTFHRILA…RFVTFIENHM (376 aa).

The enzyme catalyses a 1,2-diacyl-sn-glycero-3-phospho-(1D-myo-inositol 4-phosphate) + ATP = a 1,2-diacyl-sn-glycero-3-phospho-(1D-myo-inositol-4,5-bisphosphate) + ADP + H(+). Catalytic activity is increase by myristoylated ARF1. Phosphatidic acid has no effect on catalytic activity. Catalyzes the phosphorylation of phosphatidylinositol 4-phosphate (PtdIns(4)P/PI4P) to form phosphatidylinositol 4,5-bisphosphate (PtdIns(4,5)P2/PIP2), a lipid second messenger that regulates several cellular processes. This Plasmodium falciparum (isolate 3D7) protein is Phosphatidylinositol 4-phosphate 5-kinase.